Here is a 25-residue protein sequence, read N- to C-terminus: NYDKPPVEKPPVYKPPVEKPPVYKP.

The interval 1 to 25 (NYDKPPVEKPPVYKPPVEKPPVYKP) is disordered. 4 consecutive repeat copies span residues 5–9 (PPVEK), 10–14 (PPVYK), 15–19 (PPVEK), and 20–24 (PPVYK). The segment at 5-24 (PPVEKPPVYKPPVEKPPVYK) is 4 X 5 AA tandem repeats of P-P-V-[EY]-K. A 4-hydroxyproline mark is found at P6, P11, P16, and P21. Residues 8–25 (EKPPVYKPPVEKPPVYKP) show a composition bias toward pro residues.

Belongs to the plant proline-rich protein superfamily. ENOD12 family.

The protein localises to the secreted. It localises to the cell wall. The chain is Repetitive proline-rich cell wall protein from Phaseolus vulgaris (Kidney bean).